Consider the following 57-residue polypeptide: Protein Ric1 (57 aa).

The next 2 helical transmembrane spans lie at isoleucine 8 to cysteine 28 and isoleucine 34 to leucine 54.

It belongs to the UPF0057 (PMP3) family.

It localises to the membrane. The chain is Protein Ric1 (RIC1) from Phytophthora infestans (Potato late blight agent).